A 149-amino-acid chain; its full sequence is Protegrin-5 (149 aa).

A signal peptide spans 1–29 (METQRASLCLGRWSLWLLLLGLVVPSASA). Residues 30–130 (QALSYREAVL…DITCNEVQGV (101 aa)) constitute a propeptide that is removed on maturation. The interval 61 to 80 (DQPPKADEDPGTPKPVSFTV) is disordered. 4 disulfides stabilise this stretch: cysteine 85-cysteine 96, cysteine 107-cysteine 124, cysteine 136-cysteine 145, and cysteine 138-cysteine 143. Position 148 is an arginine amide (arginine 148).

Belongs to the cathelicidin family.

Its subcellular location is the secreted. Functionally, microbicidal activity. This chain is Protegrin-5 (NPG5), found in Sus scrofa (Pig).